A 301-amino-acid polypeptide reads, in one-letter code: MTHSIRIGTRKSPLALIQTNLVIQQIKQFVPDINYKIVPITTSGDLIQNKPLYDIGGKALFLKEIEQALLDKKIDLAVHSLKDVPGRIPEDLIIAAVLEREDPRDVFVCLKYKSIEELPQNAIIGSSAVRRKTFIEKIRSDLKVTVFRGNVDSRIKKLMNGEVDATILAYAGLKRLNAFNPQYCHLIEYSQMLPCIGQGVIAVEIRKDDNAMLETCNQINHLTTFELIKPERAFLEYLDANCRTPIAAYSKYLDKDNIETDFMLGNLESSKITFHTETTNIKTSKEAGIKAAKIMLSELER.

Cys242 is modified (S-(dipyrrolylmethanemethyl)cysteine).

The protein belongs to the HMBS family. As to quaternary structure, monomer. The cofactor is dipyrromethane.

The catalysed reaction is 4 porphobilinogen + H2O = hydroxymethylbilane + 4 NH4(+). The protein operates within porphyrin-containing compound metabolism; protoporphyrin-IX biosynthesis; coproporphyrinogen-III from 5-aminolevulinate: step 2/4. Tetrapolymerization of the monopyrrole PBG into the hydroxymethylbilane pre-uroporphyrinogen in several discrete steps. The chain is Porphobilinogen deaminase from Rickettsia canadensis (strain McKiel).